A 126-amino-acid chain; its full sequence is Histone H2B type 1-K (126 aa).

The segment covering 1–12 (MPEPAKSAPAPK) has biased composition (low complexity). The interval 1 to 36 (MPEPAKSAPAPKKGSKKAVTKAQKIDGKKRKRSRKE) is disordered. N-acetylproline is present on P2. E3 is subject to ADP-ribosyl glutamic acid. K6 is subject to N6-(2-hydroxyisobutyryl)lysine; alternate. K6 carries the N6-(beta-hydroxybutyryl)lysine; alternate modification. K6 is modified (N6-acetyllysine; alternate). K6 is modified (N6-butyryllysine; alternate). At K6 the chain carries N6-crotonyllysine; alternate. K6 carries the post-translational modification N6-lactoyllysine; alternate. K6 participates in a covalent cross-link: Glycyl lysine isopeptide (Lys-Gly) (interchain with G-Cter in SUMO2); alternate. Residue S7 is modified to ADP-ribosylserine. Residue K12 is modified to N6-(beta-hydroxybutyryl)lysine; alternate. 2 positions are modified to N6-acetyllysine; alternate: K12 and K13. K12 and K13 each carry N6-crotonyllysine; alternate. K12 carries the post-translational modification N6-lactoyllysine; alternate. K13 bears the N6-(2-hydroxyisobutyryl)lysine; alternate mark. S15 carries the phosphoserine; by STK4/MST1 modification. N6-acetyllysine; alternate occurs at positions 16, 17, 21, and 24. Residues K16, K17, K21, K24, and K35 each carry the N6-crotonyllysine; alternate modification. 4 positions are modified to N6-lactoyllysine; alternate: K16, K17, K21, and K24. Position 17 is an N6-glutaryllysine; alternate (K17). N6-(2-hydroxyisobutyryl)lysine; alternate is present on residues K21, K24, and K35. Residue K21 is modified to N6-(beta-hydroxybutyryl)lysine; alternate. N6-butyryllysine; alternate is present on K21. K21 is covalently cross-linked (Glycyl lysine isopeptide (Lys-Gly) (interchain with G-Cter in SUMO2); alternate). N6-(beta-hydroxybutyryl)lysine; alternate is present on K35. An N6-glutaryllysine; alternate modification is found at K35. Position 35 is an N6-succinyllysine; alternate (K35). K35 is covalently cross-linked (Glycyl lysine isopeptide (Lys-Gly) (interchain with G-Cter in ubiquitin); alternate). Residue E36 is modified to PolyADP-ribosyl glutamic acid. S37 carries the phosphoserine; by AMPK modification. N6-(2-hydroxyisobutyryl)lysine; alternate is present on residues K44, K47, and K58. N6-lactoyllysine; alternate is present on K44. Residues K44 and K47 each carry the N6-glutaryllysine; alternate modification. K47 carries the N6-methyllysine; alternate modification. K58 carries the post-translational modification N6,N6-dimethyllysine; alternate. Residue R80 is modified to Dimethylated arginine. Residue K86 is modified to N6-(2-hydroxyisobutyryl)lysine; alternate. K86 bears the N6-acetyllysine; alternate mark. K86 carries the N6-lactoyllysine; alternate modification. K86 is modified (N6,N6,N6-trimethyllysine; alternate). 2 positions are modified to omega-N-methylarginine: R87 and R93. K109 bears the N6-(2-hydroxyisobutyryl)lysine; alternate mark. Residue K109 is modified to N6-lactoyllysine; alternate. At K109 the chain carries N6-glutaryllysine; alternate. K109 carries the post-translational modification N6-methyllysine; alternate. An O-linked (GlcNAc) serine glycan is attached at S113. T116 bears the Phosphothreonine mark. K117 and K121 each carry N6-(2-hydroxyisobutyryl)lysine; alternate. Residue K117 is modified to N6-(beta-hydroxybutyryl)lysine; alternate. An N6-lactoyllysine; alternate mark is found at K117 and K121. Residues K117 and K121 each carry the N6-glutaryllysine; alternate modification. N6-succinyllysine; alternate is present on residues K117 and K121. The residue at position 117 (K117) is an N6-methylated lysine; alternate. A Glycyl lysine isopeptide (Lys-Gly) (interchain with G-Cter in ubiquitin); alternate cross-link involves residue K121.

The protein belongs to the histone H2B family. As to quaternary structure, the nucleosome is a histone octamer containing two molecules each of H2A, H2B, H3 and H4 assembled in one H3-H4 heterotetramer and two H2A-H2B heterodimers. The octamer wraps approximately 147 bp of DNA. In terms of processing, monoubiquitination at Lys-35 (H2BK34Ub) by the MSL1/MSL2 dimer is required for histone H3 'Lys-4' (H3K4me) and 'Lys-79' (H3K79me) methylation and transcription activation at specific gene loci, such as HOXA9 and MEIS1 loci. Similarly, monoubiquitination at Lys-121 (H2BK120Ub) by the RNF20/40 complex gives a specific tag for epigenetic transcriptional activation and is also prerequisite for histone H3 'Lys-4' and 'Lys-79' methylation. It also functions cooperatively with the FACT dimer to stimulate elongation by RNA polymerase II. H2BK120Ub also acts as a regulator of mRNA splicing: deubiquitination by USP49 is required for efficient cotranscriptional splicing of a large set of exons. Post-translationally, phosphorylated on Ser-15 (H2BS14ph) by STK4/MST1 during apoptosis; which facilitates apoptotic chromatin condensation. Also phosphorylated on Ser-15 in response to DNA double strand breaks (DSBs), and in correlation with somatic hypermutation and immunoglobulin class-switch recombination. Phosphorylation at Ser-37 (H2BS36ph) by AMPK in response to stress promotes transcription. GlcNAcylation at Ser-113 promotes monoubiquitination of Lys-121. It fluctuates in response to extracellular glucose, and associates with transcribed genes. In terms of processing, ADP-ribosylated by PARP1 or PARP2 on Ser-7 (H2BS6ADPr) in response to DNA damage. H2BS6ADPr promotes recruitment of CHD1L. Mono-ADP-ribosylated on Glu-3 (H2BE2ADPr) by PARP3 in response to single-strand breaks. Poly ADP-ribosylation on Glu-36 (H2BE35ADPr) by PARP1 regulates adipogenesis: it inhibits phosphorylation at Ser-37 (H2BS36ph), thereby blocking expression of pro-adipogenetic genes. Post-translationally, crotonylation (Kcr) is specifically present in male germ cells and marks testis-specific genes in post-meiotic cells, including X-linked genes that escape sex chromosome inactivation in haploid cells. Crotonylation marks active promoters and enhancers and confers resistance to transcriptional repressors. It is also associated with post-meiotically activated genes on autosomes. Lactylated in macrophages by EP300/P300 by using lactoyl-CoA directly derived from endogenous or exogenous lactate, leading to stimulates gene transcription.

The protein resides in the nucleus. Its subcellular location is the chromosome. Functionally, core component of nucleosome. Nucleosomes wrap and compact DNA into chromatin, limiting DNA accessibility to the cellular machineries which require DNA as a template. Histones thereby play a central role in transcription regulation, DNA repair, DNA replication and chromosomal stability. DNA accessibility is regulated via a complex set of post-translational modifications of histones, also called histone code, and nucleosome remodeling. This chain is Histone H2B type 1-K, found in Bos taurus (Bovine).